The sequence spans 110 residues: U1-lycotoxin-Ls1dd (110 aa).

The signal sequence occupies residues 1-20 (MKFVLLFGVLLVTLFSYSSA). Positions 21–44 (EMLDDFDQADEDELLSLIEKEEAR) are excised as a propeptide. Cystine bridges form between Cys-47–Cys-62, Cys-54–Cys-71, Cys-61–Cys-89, and Cys-73–Cys-87.

It belongs to the neurotoxin 19 (CSTX) family. 03 subfamily. Expressed by the venom gland.

The protein resides in the secreted. The polypeptide is U1-lycotoxin-Ls1dd (Lycosa singoriensis (Wolf spider)).